We begin with the raw amino-acid sequence, 292 residues long: ATP synthase gamma chain (292 aa).

This sequence belongs to the ATPase gamma chain family. As to quaternary structure, F-type ATPases have 2 components, CF(1) - the catalytic core - and CF(0) - the membrane proton channel. CF(1) has five subunits: alpha(3), beta(3), gamma(1), delta(1), epsilon(1). CF(0) has three main subunits: a, b and c.

It is found in the cell inner membrane. Its function is as follows. Produces ATP from ADP in the presence of a proton gradient across the membrane. The gamma chain is believed to be important in regulating ATPase activity and the flow of protons through the CF(0) complex. This chain is ATP synthase gamma chain, found in Methylobacterium nodulans (strain LMG 21967 / CNCM I-2342 / ORS 2060).